We begin with the raw amino-acid sequence, 211 residues long: Pyridoxine/pyridoxamine 5'-phosphate oxidase (211 aa).

Residues 7–10 (RREY) and Lys65 contribute to the substrate site. FMN-binding positions include 60-65 (RIVLLK), 75-76 (YT), Arg81, Lys82, and Gln104. Substrate contacts are provided by Tyr122, Arg126, and Ser130. FMN contacts are provided by residues 139 to 140 (QS) and Trp184. Substrate is bound at residue 190–192 (RLH). Residue Arg194 participates in FMN binding.

Belongs to the pyridoxamine 5'-phosphate oxidase family. In terms of assembly, homodimer. It depends on FMN as a cofactor.

The catalysed reaction is pyridoxamine 5'-phosphate + O2 + H2O = pyridoxal 5'-phosphate + H2O2 + NH4(+). It catalyses the reaction pyridoxine 5'-phosphate + O2 = pyridoxal 5'-phosphate + H2O2. Its pathway is cofactor metabolism; pyridoxal 5'-phosphate salvage; pyridoxal 5'-phosphate from pyridoxamine 5'-phosphate: step 1/1. It participates in cofactor metabolism; pyridoxal 5'-phosphate salvage; pyridoxal 5'-phosphate from pyridoxine 5'-phosphate: step 1/1. In terms of biological role, catalyzes the oxidation of either pyridoxine 5'-phosphate (PNP) or pyridoxamine 5'-phosphate (PMP) into pyridoxal 5'-phosphate (PLP). The polypeptide is Pyridoxine/pyridoxamine 5'-phosphate oxidase (Vibrio atlanticus (strain LGP32) (Vibrio splendidus (strain Mel32))).